The primary structure comprises 129 residues: MSGRGKQGGKVRAKAKSRSSRAGLQFPVGRVHRLLRKGNYAERVGAGAPVYLAAVLEYLTAEILELAGNAARDNKKTRIIPRHLQLAIRNDEELNKLLGKVTIAQGGVLPNIQAVLLPKKTESQKAKSK.

The interval 1–22 (MSGRGKQGGKVRAKAKSRSSRA) is disordered. Residues Lys6 and Lys10 each carry the N6-acetyllysine modification. Residues 7-19 (QGGKVRAKAKSRS) show a composition bias toward basic residues. Lys10 carries the N6-lactoyllysine; alternate modification. Gln105 carries the post-translational modification N5-methylglutamine. A Phosphothreonine; by DCAF1 modification is found at Thr121.

Belongs to the histone H2A family. The nucleosome is a histone octamer containing two molecules each of H2A, H2B, H3 and H4 assembled in one H3-H4 heterotetramer and two H2A-H2B heterodimers. The octamer wraps approximately 147 bp of DNA. In terms of processing, monoubiquitination of Lys-120 (H2AXK119ub) gives a specific tag for epigenetic transcriptional repression. Following DNA double-strand breaks (DSBs), it is ubiquitinated through 'Lys-63' linkage of ubiquitin moieties. Glutamine methylation at Gln-105 (H2AQ104me) by FBL is specifically dedicated to polymerase I. It is present at 35S ribosomal DNA locus and impairs binding of the FACT complex. Post-translationally, phosphorylation on Ser-2 (H2AS1ph) is enhanced during mitosis. Phosphorylation on Ser-2 by RPS6KA5/MSK1 directly represses transcription. Acetylation of H3 inhibits Ser-2 phosphorylation by RPS6KA5/MSK1. Phosphorylation at Thr-121 (H2AT120ph) by DCAF1 is present in the regulatory region of many tumor suppresor genes and down-regulates their transcription.

It is found in the nucleus. It localises to the chromosome. In terms of biological role, core component of nucleosome. Nucleosomes wrap and compact DNA into chromatin, limiting DNA accessibility to the cellular machineries which require DNA as a template. Histones thereby play a central role in transcription regulation, DNA repair, DNA replication and chromosomal stability. DNA accessibility is regulated via a complex set of post-translational modifications of histones, also called histone code, and nucleosome remodeling. This is Histone H2A.J from Macaca fascicularis (Crab-eating macaque).